The chain runs to 365 residues: Probable galacturonosyltransferase-like 10 (365 aa).

Residues 1–10 (MMSGSRLASR) are Cytoplasmic-facing. The chain crosses the membrane as a helical; Signal-anchor for type II membrane protein span at residues 11–31 (LIIIFSIISTSFFTVESIRLF). Residues 32-365 (PDSFDDASSD…LQYNQELEIL (334 aa)) lie on the Lumenal side of the membrane. Residue asparagine 209 is glycosylated (N-linked (GlcNAc...) asparagine).

Belongs to the glycosyltransferase 8 family.

The protein resides in the golgi apparatus membrane. Its pathway is glycan metabolism; pectin biosynthesis. In terms of biological role, may be involved in pectin and/or xylans biosynthesis in cell walls. The polypeptide is Probable galacturonosyltransferase-like 10 (GATL10) (Arabidopsis thaliana (Mouse-ear cress)).